The following is a 212-amino-acid chain: Nascent polypeptide-associated complex subunit alpha-like protein 4 (212 aa).

Residues 25 to 35 (QKENDVVVEDV) are compositionally biased toward basic and acidic residues. Residues 25–74 (QKENDVVVEDVKDGDEDDDDVDDDDDEIADGAGENEASKQSRSEKKSRKA) are disordered. Residues 36-53 (KDGDEDDDDVDDDDDEIA) are compositionally biased toward acidic residues. The NAC-A/B domain occupies 65–130 (SRSEKKSRKA…AKIDDMSSQL (66 aa)). Residues 173–210 (VEAKDIDLVMTQAGVSRPKAVKALKESNGDIVSAIMEL) form the UBA domain.

It belongs to the NAC-alpha family.

Its function is as follows. May promote appropriate targeting of ribosome-nascent polypeptide complexes. The chain is Nascent polypeptide-associated complex subunit alpha-like protein 4 from Arabidopsis thaliana (Mouse-ear cress).